Here is an 811-residue protein sequence, read N- to C-terminus: Elongation factor G, mitochondrial (811 aa).

A mitochondrion-targeting transit peptide spans 1-64; it reads MSAIARAAAR…FQQSFQRRWA (64 aa). In terms of domain architecture, tr-type G spans 96–394; the sequence is RRQRNVGISA…GVCAYLPNPS (299 aa). Residues 105 to 112, 192 to 196, and 246 to 249 contribute to the GTP site; these read AHIDSGKT, DTPGH, and NKMD.

The protein belongs to the TRAFAC class translation factor GTPase superfamily. Classic translation factor GTPase family. EF-G/EF-2 subfamily.

It localises to the mitochondrion. The protein operates within protein biosynthesis; polypeptide chain elongation. Mitochondrial GTPase that catalyzes the GTP-dependent ribosomal translocation step during translation elongation. During this step, the ribosome changes from the pre-translocational (PRE) to the post-translocational (POST) state as the newly formed A-site-bound peptidyl-tRNA and P-site-bound deacylated tRNA move to the P and E sites, respectively. Catalyzes the coordinated movement of the two tRNA molecules, the mRNA and conformational changes in the ribosome. The polypeptide is Elongation factor G, mitochondrial (Cryptococcus neoformans var. neoformans serotype D (strain JEC21 / ATCC MYA-565) (Filobasidiella neoformans)).